We begin with the raw amino-acid sequence, 119 residues long: Large ribosomal subunit protein uL22 (119 aa).

This sequence belongs to the universal ribosomal protein uL22 family. As to quaternary structure, part of the 50S ribosomal subunit.

This protein binds specifically to 23S rRNA; its binding is stimulated by other ribosomal proteins, e.g. L4, L17, and L20. It is important during the early stages of 50S assembly. It makes multiple contacts with different domains of the 23S rRNA in the assembled 50S subunit and ribosome. Its function is as follows. The globular domain of the protein is located near the polypeptide exit tunnel on the outside of the subunit, while an extended beta-hairpin is found that lines the wall of the exit tunnel in the center of the 70S ribosome. The sequence is that of Large ribosomal subunit protein uL22 from Chlorobium chlorochromatii (strain CaD3).